A 116-amino-acid chain; its full sequence is Large ribosomal subunit protein bL19 (116 aa).

The protein belongs to the bacterial ribosomal protein bL19 family.

In terms of biological role, this protein is located at the 30S-50S ribosomal subunit interface and may play a role in the structure and function of the aminoacyl-tRNA binding site. This chain is Large ribosomal subunit protein bL19, found in Magnetococcus marinus (strain ATCC BAA-1437 / JCM 17883 / MC-1).